The primary structure comprises 638 residues: 3D-(3,5/4)-trihydroxycyclohexane-1,2-dione hydrolase (638 aa).

Position 67 (E67) interacts with thiamine diphosphate. Residues S442–G523 are thiamine pyrophosphate binding. Mg(2+)-binding residues include D494 and N521.

The protein belongs to the TPP enzyme family. The cofactor is Mg(2+). It depends on thiamine diphosphate as a cofactor.

The catalysed reaction is 3D-3,5/4-trihydroxycyclohexane-1,2-dione + H2O = 5-deoxy-D-glucuronate + H(+). It participates in polyol metabolism; myo-inositol degradation into acetyl-CoA; acetyl-CoA from myo-inositol: step 3/7. In terms of biological role, involved in the cleavage of the C1-C2 bond of 3D-(3,5/4)-trihydroxycyclohexane-1,2-dione (THcHDO) to yield 5-deoxy-glucuronate (5DG). This Listeria monocytogenes serovar 1/2a (strain ATCC BAA-679 / EGD-e) protein is 3D-(3,5/4)-trihydroxycyclohexane-1,2-dione hydrolase.